We begin with the raw amino-acid sequence, 402 residues long: Homoserine O-acetyltransferase (402 aa).

An AB hydrolase-1 domain is found at 38–359 (NAVLVCHALT…HGHDAFLVEP (322 aa)). Residue S146 is the Nucleophile of the active site. Substrate is bound at residue R217. Residues D319 and H352 contribute to the active site. D353 provides a ligand contact to substrate.

Belongs to the AB hydrolase superfamily. MetX family. Homodimer.

The protein localises to the cytoplasm. The enzyme catalyses L-homoserine + acetyl-CoA = O-acetyl-L-homoserine + CoA. Its pathway is amino-acid biosynthesis; L-methionine biosynthesis via de novo pathway; O-acetyl-L-homoserine from L-homoserine: step 1/1. In terms of biological role, transfers an acetyl group from acetyl-CoA to L-homoserine, forming acetyl-L-homoserine. The sequence is that of Homoserine O-acetyltransferase from Haloarcula marismortui (strain ATCC 43049 / DSM 3752 / JCM 8966 / VKM B-1809) (Halobacterium marismortui).